A 79-amino-acid chain; its full sequence is Large ribosomal subunit protein uL29 (79 aa).

This sequence belongs to the universal ribosomal protein uL29 family.

This chain is Large ribosomal subunit protein uL29, found in Tropheryma whipplei (strain Twist) (Whipple's bacillus).